The primary structure comprises 64 residues: Large ribosomal subunit protein bL35c (64 aa).

This sequence belongs to the bacterial ribosomal protein bL35 family.

It localises to the plastid. The protein localises to the chloroplast. The polypeptide is Large ribosomal subunit protein bL35c (Cyanidium caldarium (Red alga)).